We begin with the raw amino-acid sequence, 317 residues long: D-alanine--D-alanine ligase (317 aa).

One can recognise an ATP-grasp domain in the interval 111 to 308 (KRFWNGIGIP…YASLVEKIAQ (198 aa)). Residue 137–192 (EEQMSYPVIVKPSREGSTIGINKAMNRAELDDALIKALEYDSDILVEEFIDGPEFT) participates in ATP binding. Mg(2+) contacts are provided by D262, E275, and N277.

The protein belongs to the D-alanine--D-alanine ligase family. The cofactor is Mg(2+). It depends on Mn(2+) as a cofactor.

It localises to the cytoplasm. The enzyme catalyses 2 D-alanine + ATP = D-alanyl-D-alanine + ADP + phosphate + H(+). The protein operates within cell wall biogenesis; peptidoglycan biosynthesis. Cell wall formation. This is D-alanine--D-alanine ligase from Marinomonas sp. (strain MWYL1).